The primary structure comprises 552 residues: Hyaluronan synthase 2 (552 aa).

Topologically, residues 1 to 11 (MHCERFLCVLR) are cytoplasmic. A helical membrane pass occupies residues 12–32 (IIGTTLFGVSLLLGITAAYIV). At 33-45 (GYQFIQTDNYYFS) the chain is on the extracellular side. A helical transmembrane segment spans residues 46–66 (FGLYGAFLASHLIIQSLFAFL). Over 67 to 374 (EHRKMKKSLE…NAMWFHKHHL (308 aa)) the chain is Cytoplasmic. The residue at position 110 (threonine 110) is a Phosphothreonine. Lysine 190 participates in a covalent cross-link: Glycyl lysine isopeptide (Lys-Gly) (interchain with G-Cter in ubiquitin). Residue serine 221 is glycosylated (O-linked (GlcNAc) serine). Phosphothreonine is present on threonine 328. A helical transmembrane segment spans residues 375-395 (WMTYEAVITGFFPFFLIATVI). Topologically, residues 396–402 (QLFYRGK) are extracellular. The chain crosses the membrane as a helical span at residues 403–423 (IWNILLFLLTVQLVGLIKSSF). Residues 424–429 (ASCLRG) lie on the Cytoplasmic side of the membrane. A helical transmembrane segment spans residues 430–450 (NIVMVFMSLYSVLYMSSLLPA). Over 451–475 (KMFAIATINKAGWGTSGRKTIVVNF) the chain is Extracellular. A helical transmembrane segment spans residues 476 to 496 (IGLIPVSVWFTILLGGVIFTI). Residues 497–510 (YKESKKPFSESKQT) lie on the Cytoplasmic side of the membrane. A helical transmembrane segment spans residues 511 to 531 (VLIVGTLIYACYWVMLLTLYV). Residues 532 to 552 (VLINKCGRRKKGQQYDMVLDV) are Extracellular-facing.

It belongs to the NodC/HAS family. In terms of assembly, homodimer; dimerization promotes enzymatic activity. Forms heterodimer with HAS3. Forms heterodimer with HAS1. It depends on Mg(2+) as a cofactor. In terms of processing, phosphorylation at Thr-328 is essential for hyaluronan synthase activity. Post-translationally, O-GlcNAcylation at Ser-221 increases the stability of HAS2 and plasma membrane localization. Ubiquitination at Lys-190; this ubiquitination is essential for hyaluronan synthase activity and homo- or hetero-oligomerization. Can also be poly-ubiquitinated. Deubiquitinated by USP17L22/USP17 and USP4. USP17L22/USP17 efficiently removes 'Lys-63'- and 'Lys-48'-linked polyubiquitin chains, whereas USP4 preferentially removes monoubiquitination and, partially, both 'Lys-63'- and 'Lys-48'-linked polyubiquitin chain. In terms of tissue distribution, expressed in heart, brain, spleen, lung and skeletal muscle.

It is found in the cell membrane. It localises to the endoplasmic reticulum membrane. Its subcellular location is the vesicle. The protein localises to the golgi apparatus membrane. The protein resides in the lysosome. The catalysed reaction is [hyaluronan](n) + UDP-N-acetyl-alpha-D-glucosamine = N-acetyl-beta-D-glucosaminyl-(1-&gt;4)-[hyaluronan](n) + UDP + H(+). The enzyme catalyses N-acetyl-beta-D-glucosaminyl-(1-&gt;4)-[hyaluronan](n) + UDP-alpha-D-glucuronate = [hyaluronan](n+1) + UDP + H(+). It functions in the pathway glycan biosynthesis; hyaluronan biosynthesis. Functionally, catalyzes the addition of GlcNAc or GlcUA monosaccharides to the nascent hyaluronan polymer. Therefore, it is essential to hyaluronan synthesis a major component of most extracellular matrices that has a structural role in tissues architectures and regulates cell adhesion, migration and differentiation. This is one of the isozymes catalyzing that reaction and it is particularly responsible for the synthesis of high molecular mass hyaluronan. Required for the transition of endocardial cushion cells into mesenchymal cells, a process crucial for heart development. May also play a role in vasculogenesis. High molecular mass hyaluronan also play a role in early contact inhibition a process which stops cell growth when cells come into contact with each other or the extracellular matrix. Catalyzes the addition of GlcNAc or GlcUA monosaccharides to the nascent hyaluronan polymer. Therefore, it is essential to hyaluronan synthesis a major component of most extracellular matrices that has a structural role in tissues architectures and regulates cell adhesion, migration and differentiation. This is one of three isoenzymes responsible for cellular hyaluronan synthesis and it is particularly responsible for the synthesis of high molecular mass hyaluronan. The protein is Hyaluronan synthase 2 of Mus musculus (Mouse).